We begin with the raw amino-acid sequence, 177 residues long: MDIAIQHPWLRRPLFPSSIFPSRIFDQNFGEHFDPDLFPSFSSMLSPFYWRMGAPMARMPSWAQTGLSELRLDKDKFAIHLDVKHFTPEELRVKILGDFIEVQAQHEERQDEHGYVSREFHRKYKVPAGVDPLVITCSLSADGVLTITGPRKVADVPERSVPISRDEKPAVAGPQQK.

Methionine 1 carries the post-translational modification N-acetylmethionine. The sHSP domain maps to 58-166 (RMPSWAQTGL…PERSVPISRD (109 aa)). 5 residues coordinate Zn(2+): histidine 85, histidine 106, glutamate 108, histidine 113, and histidine 121. A compositionally biased stretch (basic and acidic residues) spans 155-169 (DVPERSVPISRDEKP). The interval 155 to 177 (DVPERSVPISRDEKPAVAGPQQK) is disordered.

It belongs to the small heat shock protein (HSP20) family. As to quaternary structure, heteromer composed of three CRYAA and one CRYAB subunits. Aggregates with homologous proteins, including the small heat shock protein HSPB1, to form large heteromeric complexes. Inter-subunit bridging via zinc ions enhances stability, which is crucial as there is no protein turn over in the lens. Interacts with HSPBAP1 and TTN/titin.

In terms of biological role, may contribute to the transparency and refractive index of the lens. This Squalus acanthias (Spiny dogfish) protein is Alpha-crystallin B chain (CRYAB).